Reading from the N-terminus, the 417-residue chain is Origin of replication complex subunit 4 (417 aa).

59-66 (GPRGSGKA) lines the ATP pocket.

It belongs to the ORC4 family. As to quaternary structure, component of the origin recognition complex (ORC) composed of at least ORC1 (ORC1A or ORC1B), ORC2, ORC3, ORC4, ORC5 and ORC6. ORC is regulated in a cell-cycle and development dependent manner. It is sequentially assembled at the exit from anaphase of mitosis and disassembled as cells enter S phase. Interacts directly with ORC1A, ORC2, ORC3, ORC5 and ORC6. Follow a cell-cycle regulation with a peak at the G1/S-phase. Isoform AtORC4a is expressed at low levels ubiquitously. Isoform AtORC4b is mostly expressed in siliques, flowers and flower buds, and, to a lower exent, in roots, leaves and stems.

It localises to the nucleus. Its function is as follows. Component of the origin recognition complex (ORC) that binds origins of replication. DNA-binding is ATP-dependent. The specific DNA sequences that define origins of replication have not been identified yet. ORC is required to assemble the pre-replication complex necessary to initiate DNA replication. This chain is Origin of replication complex subunit 4, found in Arabidopsis thaliana (Mouse-ear cress).